The following is a 490-amino-acid chain: Cytochrome P450 90D2 (490 aa).

The chain crosses the membrane as a helical span at residues 4–24 (AAAGWAAPAFAVAAVVIWVVL). Cys-437 contacts heme.

It belongs to the cytochrome P450 family. The cofactor is heme. In terms of tissue distribution, expressed at low levels leaf blades, shoot apex and elongating stem.

The protein resides in the membrane. The enzyme catalyses 6-deoxoteasterone + reduced [NADPH--hemoprotein reductase] + O2 = 3-dehydro-6-deoxoteasterone + oxidized [NADPH--hemoprotein reductase] + 2 H2O + H(+). It functions in the pathway plant hormone biosynthesis; brassinosteroid biosynthesis. Catalyzes the C6-oxidation step in brassinosteroids biosynthesis. May convert 6-deoxoteasterone (6-deoxoTE) to 3-dehydro-6-deoxoteasterone (6-deoxo3DT, 6-deoxo3DHT), and teasterone (TE) to 3-dehydroteasterone (3DT, 3-DHT). Involved in the elongation of leaf sheaths and stems. This chain is Cytochrome P450 90D2, found in Oryza sativa subsp. japonica (Rice).